The chain runs to 551 residues: 2,3-bisphosphoglycerate-independent phosphoglycerate mutase (551 aa).

The Mn(2+) site is built by Asp-22 and Ser-74. The Phosphoserine intermediate role is filled by Ser-74. Substrate-binding positions include His-135, 165-166, Arg-201, Arg-208, and 281-284; these read RD and RGDR. Mn(2+) is bound at residue Asp-319. Substrate is bound at residue Lys-356. Mn(2+) is bound by residues Asp-424, His-428, Asp-465, His-466, and His-495.

It belongs to the BPG-independent phosphoglycerate mutase family. Monomer. Mn(2+) serves as cofactor.

It is found in the cytoplasm. The enzyme catalyses (2R)-2-phosphoglycerate = (2R)-3-phosphoglycerate. Its pathway is carbohydrate degradation; glycolysis; pyruvate from D-glyceraldehyde 3-phosphate: step 3/5. In terms of biological role, catalyzes the interconversion of 2-phosphoglycerate (2-PGA) and 3-phosphoglycerate (3-PGA). The sequence is that of 2,3-bisphosphoglycerate-independent phosphoglycerate mutase from Trypanosoma brucei brucei (strain 927/4 GUTat10.1).